The following is a 435-amino-acid chain: Putative F-box/FBD/LRR-repeat protein At5g56810 (435 aa).

The F-box domain occupies 14 to 62 (PDRISQLPNDLLFRILSLIPVSDAMSTSLLSKRWKSVWKMLPTLVYNEN). LRR repeat units lie at residues 64 to 95 (CSNI…TLEL), 146 to 173 (LKLQ…YLTC), 174 to 199 (VNFE…FLQR), 222 to 248 (KEQA…NIFD), 266 to 291 (SVRV…SLDL), and 316 to 341 (YDNF…KLNH). Residues 353–404 (CSVSEPSSVPECLSFHLETFQWIGYAGTFEEIAAAVYVLKNARCLKNATISL) form the FBD domain.

The sequence is that of Putative F-box/FBD/LRR-repeat protein At5g56810 from Arabidopsis thaliana (Mouse-ear cress).